The chain runs to 324 residues: Phosphate transport system permease protein PstC (324 aa).

The next 6 helical transmembrane spans lie at 29-49 (LLLTAAVAFVLIALVSAALSM), 87-107 (IVTALIAMLIAMPVSLGIAFF), 126-146 (LLAGIPSIIYGMWGLFVLVPV), 173-193 (PLGIGTLTAGFVLAIMVIPFI), 235-255 (VIGGMFLGLGRALGETMAVAF), and 291-311 (SALLLLGFVLFIVTFAVLVIA). An ABC transmembrane type-1 domain is found at 83–311 (IYGTIVTALI…IVTFAVLVIA (229 aa)).

The protein belongs to the binding-protein-dependent transport system permease family. CysTW subfamily.

The protein resides in the cell inner membrane. Part of a binding-protein-dependent transport system for phosphate; probably responsible for the translocation of the substrate across the membrane. This is Phosphate transport system permease protein PstC (pstC) from Xylella fastidiosa (strain Temecula1 / ATCC 700964).